The primary structure comprises 702 residues: Elongation factor G (702 aa).

In terms of domain architecture, tr-type G spans 8 to 290; that stretch reads HRVRNIGIAA…AVAMYLPAPT (283 aa). Residues 17-24, 87-91, and 141-144 each bind GTP; these read AHIDAGKT, DTPGH, and NKMD.

It belongs to the TRAFAC class translation factor GTPase superfamily. Classic translation factor GTPase family. EF-G/EF-2 subfamily.

It localises to the cytoplasm. Functionally, catalyzes the GTP-dependent ribosomal translocation step during translation elongation. During this step, the ribosome changes from the pre-translocational (PRE) to the post-translocational (POST) state as the newly formed A-site-bound peptidyl-tRNA and P-site-bound deacylated tRNA move to the P and E sites, respectively. Catalyzes the coordinated movement of the two tRNA molecules, the mRNA and conformational changes in the ribosome. In Aliarcobacter butzleri (strain RM4018) (Arcobacter butzleri), this protein is Elongation factor G.